The chain runs to 247 residues: Protein At-4/1 (247 aa).

2 coiled-coil regions span residues 39–126 (VESS…YKIR) and 182–247 (LLME…LSSS).

Interacts with viral tomato spotted wilt virus (TSWV) movement protein NSM, which is involved in cell-to cell spread of viral genome and enlargement of the host plasmodesmata size exclusion limit (SEL). As to expression, expressed in leaves (at protein level).

The protein resides in the endoplasmic reticulum. It is found in the cell junction. It localises to the plasmodesma. Functionally, involved in intra- and inter-cellular trafficking through plasmodesmata (PD). This is Protein At-4/1 from Arabidopsis thaliana (Mouse-ear cress).